The chain runs to 172 residues: Protein GrpE (172 aa).

It belongs to the GrpE family. In terms of assembly, homodimer.

The protein resides in the cytoplasm. Functionally, participates actively in the response to hyperosmotic and heat shock by preventing the aggregation of stress-denatured proteins, in association with DnaK and GrpE. It is the nucleotide exchange factor for DnaK and may function as a thermosensor. Unfolded proteins bind initially to DnaJ; upon interaction with the DnaJ-bound protein, DnaK hydrolyzes its bound ATP, resulting in the formation of a stable complex. GrpE releases ADP from DnaK; ATP binding to DnaK triggers the release of the substrate protein, thus completing the reaction cycle. Several rounds of ATP-dependent interactions between DnaJ, DnaK and GrpE are required for fully efficient folding. In Thermotoga petrophila (strain ATCC BAA-488 / DSM 13995 / JCM 10881 / RKU-1), this protein is Protein GrpE.